A 217-amino-acid chain; its full sequence is Uridylate kinase (217 aa).

ATP is bound at residue 6-10 (KISGR). Residue Gly38 participates in UMP binding. ATP contacts are provided by Gly39 and Arg43. Residues Asp60 and 107-113 (FQPGQST) contribute to the UMP site. Residues Asn134, Tyr139, and Asp142 each contribute to the ATP site.

It belongs to the UMP kinase family. Homohexamer.

The protein resides in the cytoplasm. It carries out the reaction UMP + ATP = UDP + ADP. It functions in the pathway pyrimidine metabolism; CTP biosynthesis via de novo pathway; UDP from UMP (UMPK route): step 1/1. Inhibited by UTP. In terms of biological role, catalyzes the reversible phosphorylation of UMP to UDP. The sequence is that of Uridylate kinase from Pyrobaculum arsenaticum (strain DSM 13514 / JCM 11321 / PZ6).